Consider the following 294-residue polypeptide: tRNA dimethylallyltransferase (294 aa).

9–16 is an ATP binding site; sequence GATATGKS. 11-16 lines the substrate pocket; the sequence is TATGKS. Positions 34-37 are interaction with substrate tRNA; the sequence is DSRQ.

The protein belongs to the IPP transferase family. Monomer. It depends on Mg(2+) as a cofactor.

The enzyme catalyses adenosine(37) in tRNA + dimethylallyl diphosphate = N(6)-dimethylallyladenosine(37) in tRNA + diphosphate. Functionally, catalyzes the transfer of a dimethylallyl group onto the adenine at position 37 in tRNAs that read codons beginning with uridine, leading to the formation of N6-(dimethylallyl)adenosine (i(6)A). The protein is tRNA dimethylallyltransferase of Trichormus variabilis (strain ATCC 29413 / PCC 7937) (Anabaena variabilis).